The following is a 379-amino-acid chain: Queuine tRNA-ribosyltransferase (379 aa).

Aspartate 94 functions as the Proton acceptor in the catalytic mechanism. Residues 94-98, aspartate 148, glutamine 191, and glycine 218 each bind substrate; that span reads DSGGF. Residues 249-255 form an RNA binding region; that stretch reads GVGSPDA. The active-site Nucleophile is aspartate 268. Positions 273–277 are RNA binding; important for wobble base 34 recognition; it reads TRIAR. Residues cysteine 306, cysteine 308, cysteine 311, and histidine 337 each contribute to the Zn(2+) site.

This sequence belongs to the queuine tRNA-ribosyltransferase family. In terms of assembly, homodimer. Within each dimer, one monomer is responsible for RNA recognition and catalysis, while the other monomer binds to the replacement base PreQ1. Requires Zn(2+) as cofactor.

It catalyses the reaction 7-aminomethyl-7-carbaguanine + guanosine(34) in tRNA = 7-aminomethyl-7-carbaguanosine(34) in tRNA + guanine. The protein operates within tRNA modification; tRNA-queuosine biosynthesis. In terms of biological role, catalyzes the base-exchange of a guanine (G) residue with the queuine precursor 7-aminomethyl-7-deazaguanine (PreQ1) at position 34 (anticodon wobble position) in tRNAs with GU(N) anticodons (tRNA-Asp, -Asn, -His and -Tyr). Catalysis occurs through a double-displacement mechanism. The nucleophile active site attacks the C1' of nucleotide 34 to detach the guanine base from the RNA, forming a covalent enzyme-RNA intermediate. The proton acceptor active site deprotonates the incoming PreQ1, allowing a nucleophilic attack on the C1' of the ribose to form the product. After dissociation, two additional enzymatic reactions on the tRNA convert PreQ1 to queuine (Q), resulting in the hypermodified nucleoside queuosine (7-(((4,5-cis-dihydroxy-2-cyclopenten-1-yl)amino)methyl)-7-deazaguanosine). This chain is Queuine tRNA-ribosyltransferase, found in Staphylococcus aureus (strain bovine RF122 / ET3-1).